We begin with the raw amino-acid sequence, 72 residues long: Large ribosomal subunit protein bL31 (72 aa).

Zn(2+)-binding residues include cysteine 16, cysteine 18, cysteine 37, and cysteine 40.

Belongs to the bacterial ribosomal protein bL31 family. Type A subfamily. In terms of assembly, part of the 50S ribosomal subunit. The cofactor is Zn(2+).

Its function is as follows. Binds the 23S rRNA. The polypeptide is Large ribosomal subunit protein bL31 (Buchnera aphidicola subsp. Schizaphis graminum (strain Sg)).